A 371-amino-acid chain; its full sequence is Cytochrome b (371 aa).

4 consecutive transmembrane segments (helical) span residues 25–45 (FGSMLLSCLMLQVTTGFFLAV), 69–90 (WMMQNTHAIGASLFFICIYIHI), 105–125 (WMSGTTLLITLMATAFFGYIL), and 170–190 (FFALHFILPFIIISLSSLHIL). Histidine 75 and histidine 89 together coordinate heme b. Residues histidine 174 and histidine 188 each coordinate heme b. Histidine 193 serves as a coordination point for a ubiquinone. 4 helical membrane-spanning segments follow: residues 218–238 (YKDLLLLTLLLTLLLLTTFFL), 280–300 (LGGALALVASILIIMTMPFTH), 312–332 (MSQLMFWTLISTFMTITWAAT), and 339–358 (FMMISQTASMIYFMFFISNP).

It belongs to the cytochrome b family. As to quaternary structure, the cytochrome bc1 complex contains 3 respiratory subunits (MT-CYB, CYC1 and UQCRFS1), 2 core proteins (UQCRC1 and UQCRC2) and probably 6 low-molecular weight proteins. Heme b serves as cofactor.

The protein localises to the mitochondrion inner membrane. In terms of biological role, component of the ubiquinol-cytochrome c reductase complex (complex III or cytochrome b-c1 complex) that is part of the mitochondrial respiratory chain. The b-c1 complex mediates electron transfer from ubiquinol to cytochrome c. Contributes to the generation of a proton gradient across the mitochondrial membrane that is then used for ATP synthesis. This chain is Cytochrome b (MT-CYB), found in Casarea dussumieri (Round Island keel-scaled boa).